The chain runs to 335 residues: Fimbrial adhesin PapGIII (335 aa).

The first 21 residues, 1-21 (MKKWLPAFLFLSLSGCNDALA), serve as a signal peptide directing secretion.

It belongs to the adhesin PapG family.

The protein resides in the secreted. It is found in the fimbrium. Tip adhesin component of type P pili that binds preferentially to Gal-alpha(1-4)-Gal-containing glycolipids such as globoside. This tip is common in E.coli strains that cause human cystitis, but rare in pyelonephritic isolates. This Escherichia coli protein is Fimbrial adhesin PapGIII.